Consider the following 460-residue polypeptide: Serine--tRNA ligase (460 aa).

A compositionally biased stretch (basic and acidic residues) spans 43-66 (AEGDGLRQERNEVSSKIGELKQDG). Residues 43 to 81 (AEGDGLRQERNEVSSKIGELKQDGKDEEAQEAIDRSQEL) are disordered. 242–244 (TAE) contacts L-serine. Residues 273–275 (RRE) and V289 each bind ATP. E296 is an L-serine binding site. 369-372 (EVSS) is a binding site for ATP. S405 contacts L-serine.

This sequence belongs to the class-II aminoacyl-tRNA synthetase family. Type-1 seryl-tRNA synthetase subfamily. As to quaternary structure, homodimer. The tRNA molecule binds across the dimer.

It localises to the cytoplasm. The enzyme catalyses tRNA(Ser) + L-serine + ATP = L-seryl-tRNA(Ser) + AMP + diphosphate + H(+). It catalyses the reaction tRNA(Sec) + L-serine + ATP = L-seryl-tRNA(Sec) + AMP + diphosphate + H(+). It functions in the pathway aminoacyl-tRNA biosynthesis; selenocysteinyl-tRNA(Sec) biosynthesis; L-seryl-tRNA(Sec) from L-serine and tRNA(Sec): step 1/1. Its function is as follows. Catalyzes the attachment of serine to tRNA(Ser). Is also probably able to aminoacylate tRNA(Sec) with serine, to form the misacylated tRNA L-seryl-tRNA(Sec), which will be further converted into selenocysteinyl-tRNA(Sec). The polypeptide is Serine--tRNA ligase (serS) (Haloarcula marismortui (strain ATCC 43049 / DSM 3752 / JCM 8966 / VKM B-1809) (Halobacterium marismortui)).